The sequence spans 306 residues: Acetyl-coenzyme A carboxylase carboxyl transferase subunit beta (306 aa).

The CoA carboxyltransferase N-terminal domain occupies 25-294; it reads LWIKDPTSGE…VFNPSDPSPT (270 aa). The interval 286 to 306 is disordered; sequence FNPSDPSPTDSQTSLSTTKAA. Residues 288–306 are compositionally biased toward low complexity; it reads PSDPSPTDSQTSLSTTKAA.

The protein belongs to the AccD/PCCB family. As to quaternary structure, acetyl-CoA carboxylase is a heterohexamer composed of biotin carboxyl carrier protein (AccB), biotin carboxylase (AccC) and two subunits each of ACCase subunit alpha (AccA) and ACCase subunit beta (AccD).

Its subcellular location is the cytoplasm. The catalysed reaction is N(6)-carboxybiotinyl-L-lysyl-[protein] + acetyl-CoA = N(6)-biotinyl-L-lysyl-[protein] + malonyl-CoA. It functions in the pathway lipid metabolism; malonyl-CoA biosynthesis; malonyl-CoA from acetyl-CoA: step 1/1. Its function is as follows. Component of the acetyl coenzyme A carboxylase (ACC) complex. Biotin carboxylase (BC) catalyzes the carboxylation of biotin on its carrier protein (BCCP) and then the CO(2) group is transferred by the transcarboxylase to acetyl-CoA to form malonyl-CoA. The polypeptide is Acetyl-coenzyme A carboxylase carboxyl transferase subunit beta (Bartonella grahamii (strain as4aup)).